The primary structure comprises 358 residues: UDP-N-acetylglucosamine--N-acetylmuramyl-(pentapeptide) pyrophosphoryl-undecaprenol N-acetylglucosamine transferase (358 aa).

Residues 11–13, asparagine 120, arginine 161, serine 188, and glutamine 282 each bind UDP-N-acetyl-alpha-D-glucosamine; that span reads TGG.

This sequence belongs to the glycosyltransferase 28 family. MurG subfamily.

The protein localises to the cell inner membrane. It carries out the reaction di-trans,octa-cis-undecaprenyl diphospho-N-acetyl-alpha-D-muramoyl-L-alanyl-D-glutamyl-meso-2,6-diaminopimeloyl-D-alanyl-D-alanine + UDP-N-acetyl-alpha-D-glucosamine = di-trans,octa-cis-undecaprenyl diphospho-[N-acetyl-alpha-D-glucosaminyl-(1-&gt;4)]-N-acetyl-alpha-D-muramoyl-L-alanyl-D-glutamyl-meso-2,6-diaminopimeloyl-D-alanyl-D-alanine + UDP + H(+). It participates in cell wall biogenesis; peptidoglycan biosynthesis. Cell wall formation. Catalyzes the transfer of a GlcNAc subunit on undecaprenyl-pyrophosphoryl-MurNAc-pentapeptide (lipid intermediate I) to form undecaprenyl-pyrophosphoryl-MurNAc-(pentapeptide)GlcNAc (lipid intermediate II). The sequence is that of UDP-N-acetylglucosamine--N-acetylmuramyl-(pentapeptide) pyrophosphoryl-undecaprenol N-acetylglucosamine transferase from Synechococcus sp. (strain CC9605).